Consider the following 239-residue polypeptide: ATP synthase subunit a, chloroplastic (239 aa).

The next 5 helical transmembrane spans lie at 30–50 (VLLVSWVAIIILLLLAILGTF), 87–107 (VPFISTLFLFIFVSNWLGALV), 126–146 (INTTVALAMLTSVSYFYAGLS), 191–211 (LVVAVFNLLFPLFLPLPVMVL), and 212–232 (GLFASSIQALIFATLSASYIG).

Belongs to the ATPase A chain family. F-type ATPases have 2 components, CF(1) - the catalytic core - and CF(0) - the membrane proton channel. CF(1) has five subunits: alpha(3), beta(3), gamma(1), delta(1), epsilon(1). CF(0) has four main subunits: a, b, b' and c.

The protein resides in the plastid. The protein localises to the chloroplast thylakoid membrane. Key component of the proton channel; it plays a direct role in the translocation of protons across the membrane. The protein is ATP synthase subunit a, chloroplastic of Cyanidium caldarium (Red alga).